Consider the following 945-residue polypeptide: Isoleucine--tRNA ligase (945 aa).

The short motif at 66–76 is the 'HIGH' region element; sequence PYANGDIHLGH. Glutamate 581 is an L-isoleucyl-5'-AMP binding site. Positions 622–626 match the 'KMSKS' region motif; it reads KMSKS. Position 625 (lysine 625) interacts with ATP. The Zn(2+) site is built by cysteine 908, cysteine 911, cysteine 928, and cysteine 931.

This sequence belongs to the class-I aminoacyl-tRNA synthetase family. IleS type 1 subfamily. In terms of assembly, monomer. Requires Zn(2+) as cofactor.

It is found in the cytoplasm. The catalysed reaction is tRNA(Ile) + L-isoleucine + ATP = L-isoleucyl-tRNA(Ile) + AMP + diphosphate. Its function is as follows. Catalyzes the attachment of isoleucine to tRNA(Ile). As IleRS can inadvertently accommodate and process structurally similar amino acids such as valine, to avoid such errors it has two additional distinct tRNA(Ile)-dependent editing activities. One activity is designated as 'pretransfer' editing and involves the hydrolysis of activated Val-AMP. The other activity is designated 'posttransfer' editing and involves deacylation of mischarged Val-tRNA(Ile). The chain is Isoleucine--tRNA ligase from Paraburkholderia xenovorans (strain LB400).